The sequence spans 215 residues: Thiamine-phosphate synthase (215 aa).

Residues 42–46 (QYREK) and Asp-77 each bind 4-amino-2-methyl-5-(diphosphooxymethyl)pyrimidine. The Mg(2+) site is built by Asp-78 and Asp-97. Residue Ser-116 coordinates 4-amino-2-methyl-5-(diphosphooxymethyl)pyrimidine. Position 143–145 (143–145 (TKS)) interacts with 2-[(2R,5Z)-2-carboxy-4-methylthiazol-5(2H)-ylidene]ethyl phosphate. Lys-146 serves as a coordination point for 4-amino-2-methyl-5-(diphosphooxymethyl)pyrimidine. 2-[(2R,5Z)-2-carboxy-4-methylthiazol-5(2H)-ylidene]ethyl phosphate contacts are provided by residues Gly-174 and 194 to 195 (IS).

It belongs to the thiamine-phosphate synthase family. It depends on Mg(2+) as a cofactor.

The catalysed reaction is 2-[(2R,5Z)-2-carboxy-4-methylthiazol-5(2H)-ylidene]ethyl phosphate + 4-amino-2-methyl-5-(diphosphooxymethyl)pyrimidine + 2 H(+) = thiamine phosphate + CO2 + diphosphate. The enzyme catalyses 2-(2-carboxy-4-methylthiazol-5-yl)ethyl phosphate + 4-amino-2-methyl-5-(diphosphooxymethyl)pyrimidine + 2 H(+) = thiamine phosphate + CO2 + diphosphate. It catalyses the reaction 4-methyl-5-(2-phosphooxyethyl)-thiazole + 4-amino-2-methyl-5-(diphosphooxymethyl)pyrimidine + H(+) = thiamine phosphate + diphosphate. The protein operates within cofactor biosynthesis; thiamine diphosphate biosynthesis; thiamine phosphate from 4-amino-2-methyl-5-diphosphomethylpyrimidine and 4-methyl-5-(2-phosphoethyl)-thiazole: step 1/1. Functionally, condenses 4-methyl-5-(beta-hydroxyethyl)thiazole monophosphate (THZ-P) and 2-methyl-4-amino-5-hydroxymethyl pyrimidine pyrophosphate (HMP-PP) to form thiamine monophosphate (TMP). The protein is Thiamine-phosphate synthase of Limosilactobacillus reuteri (strain DSM 20016) (Lactobacillus reuteri).